A 31-amino-acid polypeptide reads, in one-letter code: Cytochrome b6-f complex subunit 6 (31 aa).

The helical transmembrane segment at 4–26 (LTSYFGFLLAALTITSALFIGLN) threads the bilayer.

The protein belongs to the PetL family. As to quaternary structure, the 4 large subunits of the cytochrome b6-f complex are cytochrome b6, subunit IV (17 kDa polypeptide, PetD), cytochrome f and the Rieske protein, while the 4 small subunits are PetG, PetL, PetM and PetN. The complex functions as a dimer.

It is found in the plastid. The protein localises to the chloroplast thylakoid membrane. Its function is as follows. Component of the cytochrome b6-f complex, which mediates electron transfer between photosystem II (PSII) and photosystem I (PSI), cyclic electron flow around PSI, and state transitions. PetL is important for photoautotrophic growth as well as for electron transfer efficiency and stability of the cytochrome b6-f complex. The protein is Cytochrome b6-f complex subunit 6 of Amaranthus caudatus (Love-lies-bleeding).